We begin with the raw amino-acid sequence, 134 residues long: Ribonuclease P protein component (134 aa).

It belongs to the RnpA family. Consists of a catalytic RNA component (M1 or rnpB) and a protein subunit.

It catalyses the reaction Endonucleolytic cleavage of RNA, removing 5'-extranucleotides from tRNA precursor.. RNaseP catalyzes the removal of the 5'-leader sequence from pre-tRNA to produce the mature 5'-terminus. It can also cleave other RNA substrates such as 4.5S RNA. The protein component plays an auxiliary but essential role in vivo by binding to the 5'-leader sequence and broadening the substrate specificity of the ribozyme. This Ectopseudomonas mendocina (strain ymp) (Pseudomonas mendocina) protein is Ribonuclease P protein component.